The following is a 69-amino-acid chain: Cytochrome c oxidase subunit 8A, mitochondrial (69 aa).

Residues 1 to 25 (MSVLTSLLLRGLTGSARRLPVPRAK) constitute a mitochondrion transit peptide. Residues 26–36 (VHSMPPEEELG) lie on the Mitochondrial matrix side of the membrane. The chain crosses the membrane as a helical span at residues 37 to 60 (IMEKAIGLTFCFVSLFLPAGWILS). Residues 61–69 (HLEDYKRPE) are Mitochondrial intermembrane-facing.

Belongs to the cytochrome c oxidase VIII family. As to quaternary structure, component of the cytochrome c oxidase (complex IV, CIV), a multisubunit enzyme composed of 14 subunits. The complex is composed of a catalytic core of 3 subunits MT-CO1, MT-CO2 and MT-CO3, encoded in the mitochondrial DNA, and 11 supernumerary subunits COX4I, COX5A, COX5B, COX6A, COX6B, COX6C, COX7A, COX7B, COX7C, COX8 and NDUFA4, which are encoded in the nuclear genome. The complex exists as a monomer or a dimer and forms supercomplexes (SCs) in the inner mitochondrial membrane with NADH-ubiquinone oxidoreductase (complex I, CI) and ubiquinol-cytochrome c oxidoreductase (cytochrome b-c1 complex, complex III, CIII), resulting in different assemblies (supercomplex SCI(1)III(2)IV(1) and megacomplex MCI(2)III(2)IV(2)). In terms of processing, in response to mitochondrial stress, the precursor protein is ubiquitinated by the SIFI complex in the cytoplasm before mitochondrial import, leading to its degradation. Within the SIFI complex, UBR4 initiates ubiquitin chain that are further elongated or branched by KCMF1.

It localises to the mitochondrion inner membrane. The protein operates within energy metabolism; oxidative phosphorylation. In terms of biological role, component of the cytochrome c oxidase, the last enzyme in the mitochondrial electron transport chain which drives oxidative phosphorylation. The respiratory chain contains 3 multisubunit complexes succinate dehydrogenase (complex II, CII), ubiquinol-cytochrome c oxidoreductase (cytochrome b-c1 complex, complex III, CIII) and cytochrome c oxidase (complex IV, CIV), that cooperate to transfer electrons derived from NADH and succinate to molecular oxygen, creating an electrochemical gradient over the inner membrane that drives transmembrane transport and the ATP synthase. Cytochrome c oxidase is the component of the respiratory chain that catalyzes the reduction of oxygen to water. Electrons originating from reduced cytochrome c in the intermembrane space (IMS) are transferred via the dinuclear copper A center (CU(A)) of subunit 2 and heme A of subunit 1 to the active site in subunit 1, a binuclear center (BNC) formed by heme A3 and copper B (CU(B)). The BNC reduces molecular oxygen to 2 water molecules using 4 electrons from cytochrome c in the IMS and 4 protons from the mitochondrial matrix. The chain is Cytochrome c oxidase subunit 8A, mitochondrial (COX8A) from Macaca fascicularis (Crab-eating macaque).